The following is a 356-amino-acid chain: Fructose-bisphosphate aldolase 1, chloroplastic (356 aa).

A chloroplast-targeting transit peptide spans 1 to 6 (GLTIRA). Arg53 and Lys143 together coordinate substrate. Residue Glu183 is the Proton acceptor of the active site. Lys225 acts as the Schiff-base intermediate with dihydroxyacetone-P in catalysis.

Belongs to the class I fructose-bisphosphate aldolase family.

It is found in the plastid. It localises to the chloroplast. It carries out the reaction beta-D-fructose 1,6-bisphosphate = D-glyceraldehyde 3-phosphate + dihydroxyacetone phosphate. The protein operates within carbohydrate degradation; glycolysis; D-glyceraldehyde 3-phosphate and glycerone phosphate from D-glucose: step 4/4. This chain is Fructose-bisphosphate aldolase 1, chloroplastic, found in Pisum sativum (Garden pea).